We begin with the raw amino-acid sequence, 1170 residues long: MGLAWGLGVLFLMHVCGTNRIPESGGDNSVFDIFELTGAARKGSGRRLVKGPDPSSPAFRIEDANLIPPVPDDKFQDLVDAVRAEKGFLLLASLRQMKKTRGTLLALERKDHSGQVFSVVSNGKAGTLDLSLTVQGKQHVVSVEEALLATGQWKSITLFVQEDRAQLYIDCEKMENAELDVPIQSVFTRDLASIARLRIAKGGVNDNFQGVLQNVRFVFGTTPEDILRNKGCSSSTSVLLTLDNNVVNGSSPAIRTNYIGHKTKDLQAICGISCDELSSMVLELRGLRTIVTTLQDSIRKVTEENKELANELRRPPLCYHNGVQYRNNEEWTVDSCTECHCQNSVTICKKVSCPIMPCSNATVPDGECCPRCWPSDSADDGWSPWSEWTSCSTSCGNGIQQRGRSCDSLNNRCEGSSVQTRTCHIQECDKRFKQDGGWSHWSPWSSCSVTCGDGVITRIRLCNSPSPQMNGKPCEGEARETKACKKDACPINGGWGPWSPWDICSVTCGGGVQKRSRLCNNPTPQFGGKDCVGDVTENQICNKQDCPIDGCLSNPCFAGVKCTSYPDGSWKCGACPPGYSGNGIQCTDVDECKEVPDACFNHNGEHRCENTDPGYNCLPCPPRFTGSQPFGQGVEHATANKQVCKPRNPCTDGTHDCNKNAKCNYLGHYSDPMYRCECKPGYAGNGIICGEDTDLDGWPNENLVCVANATYHCKKDNCPNLPNSGQEDYDKDGIGDACDDDDDNDKIPDDRDNCPFHYNPAQYDYDRDDVGDRCDNCPYNHNPDQADTDNNGEGDACAADIDGDGILNERDNCQYVYNVDQRDTDMDGVGDQCDNCPLEHNPDQLDSDSDRIGDTCDNNQDIDEDGHQNNLDNCPYVPNANQADHDKDGKGDACDHDDDNDGIPDDKDNCRLVPNPDQKDSDGDGRGDACKDDFDHDSVPDIDDICPENVDISETDFRRFQMIPLDPKGTSQNDPNWVVRHQGKELVQTVNCDPGLAVGYDEFNAVDFSGTFFINTERDDDYAGFVFGYQSSSRFYVVMWKQVTQSYWDTNPTRAQGYSGLSVKVVNSTTGPGEHLRNALWHTGNTPGQVRTLWHDPRHIGWKDFTAYRWRLSHRPKTGFIRVVMYEGKKIMADSGPIYDKTYAGGRLGLFVFSQEMVFFSDLKYECRDP.

The first 18 residues, methionine 1 to threonine 18, serve as a signal peptide directing secretion. Residues arginine 47–arginine 95 are heparin-binding. A Laminin G-like domain is found at asparagine 65–cysteine 270. A disulfide bridge connects residues cysteine 171 and cysteine 232. 2 N-linked (GlcNAc...) asparagine glycosylation sites follow: asparagine 248 and asparagine 360. In terms of domain architecture, VWFC spans proline 316 to tryptophan 373. TSP type-1 domains follow at residues aspartate 379–aspartate 429, aspartate 435–proline 490, and asparagine 492–proline 547. Tryptophan 385 carries C-linked (Man) tryptophan glycosylation. 3 cysteine pairs are disulfide-bonded: cysteine 391/cysteine 423, cysteine 395/cysteine 428, and cysteine 406/cysteine 413. Serine 394 carries O-linked (Fuc...) serine glycosylation. C-linked (Man) tryptophan glycans are attached at residues tryptophan 438 and tryptophan 441. 3 disulfides stabilise this stretch: cysteine 447-cysteine 484, cysteine 451-cysteine 489, and cysteine 462-cysteine 474. Residue threonine 450 is glycosylated (O-linked (Fuc...) threonine). A glycan (C-linked (Man) tryptophan) is linked at tryptophan 498. Cystine bridges form between cysteine 504–cysteine 541, cysteine 508–cysteine 546, cysteine 519–cysteine 531, cysteine 551–cysteine 562, cysteine 556–cysteine 572, cysteine 575–cysteine 586, cysteine 592–cysteine 608, cysteine 599–cysteine 617, cysteine 620–cysteine 644, cysteine 650–cysteine 663, cysteine 657–cysteine 676, cysteine 678–cysteine 689, cysteine 705–cysteine 713, cysteine 718–cysteine 738, cysteine 754–cysteine 774, cysteine 777–cysteine 797, cysteine 813–cysteine 833, cysteine 836–cysteine 856, cysteine 874–cysteine 894, cysteine 910–cysteine 930, and cysteine 946–cysteine 1167. The O-linked (Fuc...) threonine glycan is linked to threonine 507. An involved in retention in extracellular matrix (ECM); involved in trimer formation region spans residues cysteine 531 to valine 1152. One can recognise an EGF-like 1 domain in the interval proline 547 to threonine 587. Serine 553 carries an O-linked (Xyl) serine glycan. The EGF-like 2 domain maps to proline 646–glycine 690. TSP type-3 repeat units lie at residues glutamate 691 to glutamine 726, glutamate 727 to glutamine 762, tyrosine 763 to glutamine 785, alanine 786 to glutamine 821, arginine 822 to glutamine 844, leucine 845 to glutamine 882, alanine 883 to glutamine 918, and lysine 919 to glutamate 954. An N-linked (GlcNAc...) asparagine glycan is attached at asparagine 708. Positions glutamate 839–phenylalanine 934 are disordered. Composition is skewed to basic and acidic residues over residues histidine 840–aspartate 854, alanine 883–cysteine 894, and aspartate 917–phenylalanine 934. The Cell attachment site motif lies at arginine 926–aspartate 928. Residues arginine 958 to proline 1170 enclose the TSP C-terminal domain. A glycan (N-linked (GlcNAc...) asparagine) is linked at asparagine 1067.

It belongs to the thrombospondin family. As to quaternary structure, homotrimer; disulfide-linked. Can bind to fibrinogen, fibronectin, laminin, type V collagen and integrins alpha-V/beta-1, alpha-V/beta-3 and alpha-IIb/beta-3. Binds heparin. Interacts (via the C-terminal domain) with CD47. Interacts (via the TSP type I repeats) with CD36; the interaction conveys an antiangiogenic effect. Interacts (via the TSP type I repeats) with HRG; the interaction blocks the antiangiogenic effect of THBS1 with CD36. Interacts with ATF6 (via lumenal domain). Interacts with FN1; this interaction is enhanced by TNFAIP6, which may act as a bridging molecule between FN1 and THBS1. Interacts with SIRPA; the interaction stimulates phosphorylation of SIRPA. In terms of tissue distribution, expressed by platelets (at protein level). Expressed by monocyte-derived immature and mature dendritic cells (at protein level).

It localises to the secreted. The protein resides in the cell surface. The protein localises to the extracellular space. Its subcellular location is the extracellular matrix. It is found in the endoplasmic reticulum. It localises to the sarcoplasmic reticulum. Functionally, adhesive glycoprotein that mediates cell-to-cell and cell-to-matrix interactions. Multifunctional, involved in inflammation, angiogenesis, wound healing, reactive oxygen species (ROS) signaling, nitrous oxide (NO) signaling, apoptosis, senescence, aging, cellular self-renewal, stemness, and cardiovascular and metabolic homeostasis. Negatively modulates dendritic cell activation and cytokine release, as part of an autocrine feedback loop, contributing to the resolution of inflammation and immune homeostasis. Ligand for receptor CD47. Modulates nitrous oxide (NO) signaling via CD47, hence playing a role as a pressor agent, supporting blood pressure. Plays a role in endothelial cell senescence, acting via CD47, by increasing the abundance and activation of NADPH oxidase NOX1, and so generating excess ROS. Inhibits stem cell self-renewal, acting via CD47 signaling, probably by regulation of the stem cell transcription factors POU5F1/OCT4, SOX2, MYC/c-Myc and KLF4. Negatively modulates wound healing, acting via CD47. Ligand for receptor CD36. Involved in inducing apoptosis in podocytes in response to elevated free fatty acids, acting via CD36. Plays a role in suppressing angiogenesis, acting, depending on context, via CD36 or CD47. Promotes cellular senescence in a TP53-CDKN1A-RB1 signaling-dependent manner. Ligand for immunoglobulin-like cell surface receptor SIRPA. Involved in ROS signaling in non-phagocytic cells, stimulating NADPH oxidase-derived ROS production, acting via interaction with SIRPA. Plays a role in metabolic dysfunction in diet-induced obesity, perhaps acting by exacerbating adipose inflammatory activity; its effects may be mediated, at least in part, through enhanced adipocyte proliferation. Plays a role in ER stress response, via its interaction with the activating transcription factor 6 alpha (ATF6) which produces adaptive ER stress response factors. May be involved in age-related conditions, including metabolic dysregulation, during normal aging. The polypeptide is Thrombospondin-1 (Homo sapiens (Human)).